Consider the following 133-residue polypeptide: MTRLIYFSSRSENTHRFIARLGLPAARIPLEDRERLRADEPYILVVPTYGGGGTAGAVPRQVIRFLNDEHNRALLRGVIAAGNRNFGEGFCRAGDIIAHKCQVPFLYRFELMGTGQDIDNVRKGVSEFWQRQH.

It belongs to the NrdI family.

Probably involved in ribonucleotide reductase function. The chain is Protein NrdI from Cronobacter sakazakii (strain ATCC BAA-894) (Enterobacter sakazakii).